Here is a 332-residue protein sequence, read N- to C-terminus: Anthranilate phosphoribosyltransferase (332 aa).

Residues Gly78, 81 to 82 (GD), Ser86, 88 to 91 (NIST), 106 to 114 (KHGNKSITS), and Ser118 contribute to the 5-phospho-alpha-D-ribose 1-diphosphate site. Anthranilate is bound at residue Gly78. Ser90 is a Mg(2+) binding site. Asn109 contacts anthranilate. Position 163 (Arg163) interacts with anthranilate. Residues Asp222 and Glu223 each coordinate Mg(2+).

The protein belongs to the anthranilate phosphoribosyltransferase family. As to quaternary structure, homodimer. Mg(2+) serves as cofactor.

It carries out the reaction N-(5-phospho-beta-D-ribosyl)anthranilate + diphosphate = 5-phospho-alpha-D-ribose 1-diphosphate + anthranilate. The protein operates within amino-acid biosynthesis; L-tryptophan biosynthesis; L-tryptophan from chorismate: step 2/5. Catalyzes the transfer of the phosphoribosyl group of 5-phosphorylribose-1-pyrophosphate (PRPP) to anthranilate to yield N-(5'-phosphoribosyl)-anthranilate (PRA). The protein is Anthranilate phosphoribosyltransferase of Staphylococcus aureus (strain Mu3 / ATCC 700698).